We begin with the raw amino-acid sequence, 225 residues long: MAVRSLWAGRLRVQRLLAWSAAWESKGWPLPFSTATQRTAGEDCRSEDPPDELGPPLAERALRVKAVKLEKEVQDLTVRYQRAIADCENIRRRTQRCVEDAKIFGIQSFCKDLVEVADILEKTTECISEESEPEDQKLTLEKVFRGLLLLEAKLKSVFAKHGLEKLTPIGDKYDPHEHELICHVPAGVGVQPGTVALVRQDGYKLHGRTIRLARVEVAVESQRRL.

The N-terminal 32 residues, M1–F32, are a transit peptide targeting the mitochondrion. N6-acetyllysine is present on K142.

Belongs to the GrpE family. In terms of assembly, probable component of the PAM complex at least composed of a mitochondrial HSP70 protein, GRPEL1 or GRPEL2, TIMM44, TIMM16/PAM16 and TIMM14/DNAJC19.

It is found in the mitochondrion matrix. Functionally, essential component of the PAM complex, a complex required for the translocation of transit peptide-containing proteins from the inner membrane into the mitochondrial matrix in an ATP-dependent manner. Seems to control the nucleotide-dependent binding of mitochondrial HSP70 to substrate proteins. Stimulates ATPase activity of mt-HSP70. May also serve to modulate the interconversion of oligomeric (inactive) and monomeric (active) forms of mt-HSP70. This chain is GrpE protein homolog 2, mitochondrial (GRPEL2), found in Homo sapiens (Human).